The chain runs to 186 residues: MIEASKLKAGMTFETADGKLIRVLEASHHKPGKGNTIMRMKLRDVRTGSTFDTSYRPEEKFEQAIIETVPAQYLYQMDDTAYFMNTETYDQYEIPVVNVEEELKFILENSDVKIQFYGTEVIGVTVPTTVELVVTDTQPSIKGATVTGSGKPATLETGLVVNVPDFIEVGQKLIINTAEGTYVSRA.

The protein belongs to the elongation factor P family.

The protein resides in the cytoplasm. Its pathway is protein biosynthesis; polypeptide chain elongation. Its function is as follows. Involved in peptide bond synthesis. Stimulates efficient translation and peptide-bond synthesis on native or reconstituted 70S ribosomes in vitro. Probably functions indirectly by altering the affinity of the ribosome for aminoacyl-tRNA, thus increasing their reactivity as acceptors for peptidyl transferase. This is Elongation factor P from Streptococcus sanguinis (strain SK36).